The primary structure comprises 251 residues: Hydroxyacylglutathione hydrolase (251 aa).

The Zn(2+) site is built by histidine 53, histidine 55, aspartate 57, histidine 58, histidine 110, aspartate 127, and histidine 165.

Belongs to the metallo-beta-lactamase superfamily. Glyoxalase II family. As to quaternary structure, monomer. Zn(2+) serves as cofactor.

The catalysed reaction is an S-(2-hydroxyacyl)glutathione + H2O = a 2-hydroxy carboxylate + glutathione + H(+). It functions in the pathway secondary metabolite metabolism; methylglyoxal degradation; (R)-lactate from methylglyoxal: step 2/2. Thiolesterase that catalyzes the hydrolysis of S-D-lactoyl-glutathione to form glutathione and D-lactic acid. This is Hydroxyacylglutathione hydrolase from Escherichia coli (strain SMS-3-5 / SECEC).